The following is a 635-amino-acid chain: Threonine--tRNA ligase (635 aa).

Residues 1 to 61 form the TGS domain; sequence MITVRLPDGS…EQDSDLSIIT (61 aa). The catalytic stretch occupies residues 242-533; it reads DHRKLGRALD…LIENHAGALP (292 aa). Positions 333, 384, and 510 each coordinate Zn(2+).

Belongs to the class-II aminoacyl-tRNA synthetase family. In terms of assembly, homodimer. The cofactor is Zn(2+).

It is found in the cytoplasm. It catalyses the reaction tRNA(Thr) + L-threonine + ATP = L-threonyl-tRNA(Thr) + AMP + diphosphate + H(+). Catalyzes the attachment of threonine to tRNA(Thr) in a two-step reaction: L-threonine is first activated by ATP to form Thr-AMP and then transferred to the acceptor end of tRNA(Thr). Also edits incorrectly charged L-seryl-tRNA(Thr). This is Threonine--tRNA ligase from Herminiimonas arsenicoxydans.